Reading from the N-terminus, the 84-residue chain is UPF0298 protein NWMN_0985 (84 aa).

Belongs to the UPF0298 family.

It is found in the cytoplasm. This is UPF0298 protein NWMN_0985 from Staphylococcus aureus (strain Newman).